The chain runs to 274 residues: Shikimate dehydrogenase (NADP(+)) (274 aa).

Residues 14 to 16 (SKS) and threonine 61 each bind shikimate. Lysine 65 serves as the catalytic Proton acceptor. Position 77 (glutamate 77) interacts with NADP(+). Positions 86 and 102 each coordinate shikimate. Residues 126 to 130 (GAGGA), 149 to 154 (NRTLEK), and methionine 212 contribute to the NADP(+) site. Tyrosine 214 is a shikimate binding site. Glycine 237 contacts NADP(+).

This sequence belongs to the shikimate dehydrogenase family. As to quaternary structure, homodimer.

It catalyses the reaction shikimate + NADP(+) = 3-dehydroshikimate + NADPH + H(+). The protein operates within metabolic intermediate biosynthesis; chorismate biosynthesis; chorismate from D-erythrose 4-phosphate and phosphoenolpyruvate: step 4/7. Involved in the biosynthesis of the chorismate, which leads to the biosynthesis of aromatic amino acids. Catalyzes the reversible NADPH linked reduction of 3-dehydroshikimate (DHSA) to yield shikimate (SA). In Actinobacillus pleuropneumoniae serotype 5b (strain L20), this protein is Shikimate dehydrogenase (NADP(+)).